The sequence spans 41 residues: Photosystem I reaction center subunit IX (41 aa).

Residues 7–27 traverse the membrane as a helical segment; it reads YLSTAPVVAAAWFTFTAGLLI.

The protein belongs to the PsaJ family.

Its subcellular location is the plastid. The protein localises to the chloroplast thylakoid membrane. May help in the organization of the PsaE and PsaF subunits. The sequence is that of Photosystem I reaction center subunit IX from Oltmannsiellopsis viridis (Marine flagellate).